Reading from the N-terminus, the 160-residue chain is Putative 4-hydroxy-4-methyl-2-oxoglutarate aldolase (160 aa).

Substrate is bound by residues 76–79 (GDMI) and Arg-98. Asp-99 provides a ligand contact to a divalent metal cation.

It belongs to the class II aldolase/RraA-like family. Homotrimer. A divalent metal cation serves as cofactor.

It carries out the reaction 4-hydroxy-4-methyl-2-oxoglutarate = 2 pyruvate. The enzyme catalyses oxaloacetate + H(+) = pyruvate + CO2. Functionally, catalyzes the aldol cleavage of 4-hydroxy-4-methyl-2-oxoglutarate (HMG) into 2 molecules of pyruvate. Also contains a secondary oxaloacetate (OAA) decarboxylase activity due to the common pyruvate enolate transition state formed following C-C bond cleavage in the retro-aldol and decarboxylation reactions. This is Putative 4-hydroxy-4-methyl-2-oxoglutarate aldolase from Alcanivorax borkumensis (strain ATCC 700651 / DSM 11573 / NCIMB 13689 / SK2).